Consider the following 153-residue polypeptide: DNA gyrase inhibitor 1 (153 aa).

The protein belongs to the DNA gyrase inhibitor family. In terms of assembly, interacts with DNA gyrase.

It localises to the cytoplasm. Inhibits the supercoiling activity of DNA gyrase. Acts by inhibiting DNA gyrase at an early step, prior to (or at the step of) binding of DNA by the gyrase. It protects cells against toxins that target DNA gyrase, by inhibiting activity of these toxins and reducing the formation of lethal double-strand breaks in the cell. This chain is DNA gyrase inhibitor 1, found in Dickeya dadantii (strain 3937) (Erwinia chrysanthemi (strain 3937)).